A 270-amino-acid chain; its full sequence is Acyl-[acyl-carrier-protein]--UDP-N-acetylglucosamine O-acyltransferase (270 aa).

Belongs to the transferase hexapeptide repeat family. LpxA subfamily. Homotrimer.

It is found in the cytoplasm. It catalyses the reaction a (3R)-hydroxyacyl-[ACP] + UDP-N-acetyl-alpha-D-glucosamine = a UDP-3-O-[(3R)-3-hydroxyacyl]-N-acetyl-alpha-D-glucosamine + holo-[ACP]. The protein operates within glycolipid biosynthesis; lipid IV(A) biosynthesis; lipid IV(A) from (3R)-3-hydroxytetradecanoyl-[acyl-carrier-protein] and UDP-N-acetyl-alpha-D-glucosamine: step 1/6. Its function is as follows. Involved in the biosynthesis of lipid A, a phosphorylated glycolipid that anchors the lipopolysaccharide to the outer membrane of the cell. In Helicobacter pylori (strain P12), this protein is Acyl-[acyl-carrier-protein]--UDP-N-acetylglucosamine O-acyltransferase.